A 518-amino-acid polypeptide reads, in one-letter code: 2-isopropylmalate synthase (518 aa).

Positions 5-267 (VIIFDTTLRD…STKIKHKEIY (263 aa)) constitute a Pyruvate carboxyltransferase domain. Residues D14, H202, H204, and N238 each contribute to the Mn(2+) site. Positions 392–518 (SLSFFSVQSI…KLKKLKKINN (127 aa)) are regulatory domain.

Belongs to the alpha-IPM synthase/homocitrate synthase family. LeuA type 1 subfamily. As to quaternary structure, homodimer. Requires Mn(2+) as cofactor.

Its subcellular location is the cytoplasm. The catalysed reaction is 3-methyl-2-oxobutanoate + acetyl-CoA + H2O = (2S)-2-isopropylmalate + CoA + H(+). Its pathway is amino-acid biosynthesis; L-leucine biosynthesis; L-leucine from 3-methyl-2-oxobutanoate: step 1/4. Its function is as follows. Catalyzes the condensation of the acetyl group of acetyl-CoA with 3-methyl-2-oxobutanoate (2-ketoisovalerate) to form 3-carboxy-3-hydroxy-4-methylpentanoate (2-isopropylmalate). The protein is 2-isopropylmalate synthase of Buchnera aphidicola subsp. Rhopalosiphum padi.